Consider the following 984-residue polypeptide: Putative formate dehydrogenase SAR2393 (984 aa).

One can recognise a 2Fe-2S ferredoxin-type domain in the interval Glu-3–Asp-79. 4 residues coordinate [2Fe-2S] cluster: Cys-37, Cys-48, Cys-51, and Cys-63. Residues Asp-79–Gly-119 enclose the 4Fe-4S His(Cys)3-ligated-type domain. [4Fe-4S] cluster-binding residues include His-95, Cys-99, Cys-102, Cys-109, Cys-147, Cys-150, Cys-153, Cys-157, Cys-190, Cys-193, Cys-196, Cys-200, Cys-264, Cys-267, Cys-271, and Cys-299. 2 4Fe-4S ferredoxin-type domains span residues Pro-138–Thr-165 and Asn-181–Glu-211. The formate dehydrogenase stretch occupies residues Met-252–Lys-984. In terms of domain architecture, 4Fe-4S Mo/W bis-MGD-type spans Ile-257 to Gln-313.

It in the C-terminal section; belongs to the prokaryotic molybdopterin-containing oxidoreductase family. The cofactor is [2Fe-2S] cluster. It depends on [4Fe-4S] cluster as a cofactor. Mo-bis(molybdopterin guanine dinucleotide) serves as cofactor.

The enzyme catalyses formate + NAD(+) = CO2 + NADH. The sequence is that of Putative formate dehydrogenase SAR2393 from Staphylococcus aureus (strain MRSA252).